Here is a 453-residue protein sequence, read N- to C-terminus: Tubulin alpha-1 chain (453 aa).

Residues glutamine 11, glutamate 71, glycine 144, threonine 145, threonine 179, asparagine 206, and asparagine 228 each contribute to the GTP site. Glutamate 71 contributes to the Mg(2+) binding site. Glutamate 254 is a catalytic residue. A disordered region spans residues 433–453; the sequence is EEVGAETADGDGEEEEFGEEY.

Belongs to the tubulin family. Dimer of alpha and beta chains. A typical microtubule is a hollow water-filled tube with an outer diameter of 25 nm and an inner diameter of 15 nM. Alpha-beta heterodimers associate head-to-tail to form protofilaments running lengthwise along the microtubule wall with the beta-tubulin subunit facing the microtubule plus end conferring a structural polarity. Microtubules usually have 13 protofilaments but different protofilament numbers can be found in some organisms and specialized cells. Mg(2+) is required as a cofactor. Post-translationally, undergoes a tyrosination/detyrosination cycle, the cyclic removal and re-addition of a C-terminal tyrosine residue by the enzymes tubulin tyrosine carboxypeptidase (TTCP) and tubulin tyrosine ligase (TTL), respectively.

Its subcellular location is the cytoplasm. It is found in the cytoskeleton. It carries out the reaction GTP + H2O = GDP + phosphate + H(+). Functionally, tubulin is the major constituent of microtubules, a cylinder consisting of laterally associated linear protofilaments composed of alpha- and beta-tubulin heterodimers. Microtubules grow by the addition of GTP-tubulin dimers to the microtubule end, where a stabilizing cap forms. Below the cap, tubulin dimers are in GDP-bound state, owing to GTPase activity of alpha-tubulin. In Pelvetia fastigiata (Brown alga), this protein is Tubulin alpha-1 chain (TUBA1).